The chain runs to 743 residues: Keratin, type I cytoskeletal 9 (743 aa).

Over residues 1 to 16 (MSCRQSSSSFWSSSSS) the composition is skewed to low complexity. The interval 1–46 (MSCRQSSSSFWSSSSSCGGGGGRGGSGGSMRSSFSRSSRAGGGGGG) is disordered. The head stretch occupies residues 1 to 130 (MSCRQSSSSF…GGEGGILNTN (130 aa)). Phosphoserine occurs at positions 14 and 16. The segment covering 17 to 28 (CGGGGGRGGSGG) has biased composition (gly residues). The span at 29 to 39 (SMRSSFSRSSR) shows a compositional bias: low complexity. Phosphoserine is present on residues Ser55 and Ser155. Residues 131-166 (EKIVMQNLNSRLASYMEKVLELEESNTAMEKQIQDW) are coil 1A. The 313-residue stretch at 131 to 443 (EKIVMQNLNS…ELLEGGQQDF (313 aa)) folds into the IF rod domain. The linker 1 stretch occupies residues 167 to 185 (YSKRGPKVFQKDNTHYYDT). The segment at 186 to 277 (IEDLKDRIVD…KNHKEEMSQL (92 aa)) is coil 1B. The segment at 278 to 300 (TGQNDGDVNVEINVAPSTDLTRV) is linker 12. The segment at 301–439 (LNDMREEYEQ…ETYRELLEGG (139 aa)) is coil 2. 2 disordered regions span residues 440-468 (QQDF…GSYG) and 501-743 (GGSG…KMRY). Residues 440 to 709 (QQDFESSGAG…GGGSGSGGGS (270 aa)) are tail. 2 stretches are compositionally biased toward gly residues: residues 449–468 (GQIG…GSYG) and 501–717 (GGSG…GGGN).

The protein belongs to the intermediate filament family. Heterotetramer of two type I and two type II keratins. As to expression, expressed in footpad epidermis and testis (at protein level).

May serve an important special function either in the mature palmar and plantar skin tissue or in the morphogenetic program of the formation of these tissues. Plays a role in keratin filament assembly. Plays an essential role in the correct development of sperm. The chain is Keratin, type I cytoskeletal 9 from Mus musculus (Mouse).